Here is a 157-residue protein sequence, read N- to C-terminus: Protein Smg homolog (157 aa).

It belongs to the Smg family.

The protein is Protein Smg homolog of Shewanella woodyi (strain ATCC 51908 / MS32).